A 476-amino-acid polypeptide reads, in one-letter code: Aspartyl/glutamyl-tRNA(Asn/Gln) amidotransferase subunit B (476 aa).

Belongs to the GatB/GatE family. GatB subfamily. In terms of assembly, heterotrimer of A, B and C subunits.

It catalyses the reaction L-glutamyl-tRNA(Gln) + L-glutamine + ATP + H2O = L-glutaminyl-tRNA(Gln) + L-glutamate + ADP + phosphate + H(+). The enzyme catalyses L-aspartyl-tRNA(Asn) + L-glutamine + ATP + H2O = L-asparaginyl-tRNA(Asn) + L-glutamate + ADP + phosphate + 2 H(+). Its function is as follows. Allows the formation of correctly charged Asn-tRNA(Asn) or Gln-tRNA(Gln) through the transamidation of misacylated Asp-tRNA(Asn) or Glu-tRNA(Gln) in organisms which lack either or both of asparaginyl-tRNA or glutaminyl-tRNA synthetases. The reaction takes place in the presence of glutamine and ATP through an activated phospho-Asp-tRNA(Asn) or phospho-Glu-tRNA(Gln). In Bacillus cytotoxicus (strain DSM 22905 / CIP 110041 / 391-98 / NVH 391-98), this protein is Aspartyl/glutamyl-tRNA(Asn/Gln) amidotransferase subunit B.